The following is a 242-amino-acid chain: Probable transcriptional regulatory protein LBA0733 (242 aa).

The tract at residues 1–22 (MSGHSKWHNIQGRKNAQDAKRG) is disordered.

The protein belongs to the TACO1 family.

It localises to the cytoplasm. This chain is Probable transcriptional regulatory protein LBA0733, found in Lactobacillus acidophilus (strain ATCC 700396 / NCK56 / N2 / NCFM).